Here is a 359-residue protein sequence, read N- to C-terminus: Nicotinate N-methyltransferase 1 (359 aa).

Position 226 (Asp-226) interacts with S-adenosyl-L-methionine.

Belongs to the class I-like SAM-binding methyltransferase superfamily. Cation-independent O-methyltransferase family. As to expression, highly expressed in anthers, pistils, developing siliques, and developing seeds.

The protein localises to the cytoplasm. It is found in the cytosol. The catalysed reaction is nicotinate + S-adenosyl-L-methionine = N-methylnicotinate + S-adenosyl-L-homocysteine. Involved in nicotinate detoxification in planta. Catalyzes the conversion of nicotinate to N-methylnicotinate, which is a detoxified form of endogenous nicotinate in planta. The protein is Nicotinate N-methyltransferase 1 of Arabidopsis thaliana (Mouse-ear cress).